We begin with the raw amino-acid sequence, 327 residues long: Beta-ketoacyl-[acyl-carrier-protein] synthase III 2 (327 aa).

Active-site residues include C114 and H251. Residues 252–256 form an ACP-binding region; it reads SANLR. N281 is an active-site residue.

It belongs to the thiolase-like superfamily. FabH family. As to quaternary structure, homodimer.

The protein localises to the cytoplasm. The enzyme catalyses malonyl-[ACP] + acetyl-CoA + H(+) = 3-oxobutanoyl-[ACP] + CO2 + CoA. Its pathway is lipid metabolism; fatty acid biosynthesis. Its function is as follows. Catalyzes the condensation reaction of fatty acid synthesis by the addition to an acyl acceptor of two carbons from malonyl-ACP. Catalyzes the first condensation reaction which initiates fatty acid synthesis and may therefore play a role in governing the total rate of fatty acid production. Possesses both acetoacetyl-ACP synthase and acetyl transacylase activities. Its substrate specificity determines the biosynthesis of branched-chain and/or straight-chain of fatty acids. The polypeptide is Beta-ketoacyl-[acyl-carrier-protein] synthase III 2 (Bacillus cereus (strain ATCC 14579 / DSM 31 / CCUG 7414 / JCM 2152 / NBRC 15305 / NCIMB 9373 / NCTC 2599 / NRRL B-3711)).